A 143-amino-acid chain; its full sequence is uncharacterized protein (143 aa).

The tract at residues 1 to 21 (MAAMDTGQRADPSNPGDKEGD) is disordered.

This is an uncharacterized protein from Homo sapiens (Human).